We begin with the raw amino-acid sequence, 185 residues long: Prenylated Rab acceptor protein 1 (185 aa).

At 1–78 (MAVEKDQQKD…RNVEYYQSNY (78 aa)) the chain is on the cytoplasmic side. The interval 30–54 (AGREWLERRRATIRSWGSFVDQRRF) is required for interaction with prenylated RAB3A and VAMP2. Helical transmembrane passes span 79 to 94 (VFVFLGLILYCVATSP) and 95 to 112 (MLLVALAVFFGACYILYL). At 113–131 (RTLQSKFVLFGREVSPAHQ) the chain is on the cytoplasmic side. The next 2 helical transmembrane spans lie at 132–148 (YALAGGVSFPFFWLAGA) and 149–165 (GSAVFWVLGATLVVIGS). The interval 165-185 (SHAAFHQIEAVDGEELQMEPV) is required for interaction with GDI1. Residues 166 to 185 (HAAFHQIEAVDGEELQMEPV) are Cytoplasmic-facing. The tract at residues 175 to 185 (VDGEELQMEPV) is required for interaction with prenylated RAB3A and VAMP2. The segment at 175–185 (VDGEELQMEPV) is homodimerization.

It belongs to the PRA1 family. Homodimer. Interacts with VAMP2 (synaptobrevin-2), prenylated Rab proteins, GDI1, NDRG1 and PCLO.

Its subcellular location is the cell membrane. It localises to the cytoplasm. The protein resides in the golgi apparatus. The protein localises to the cytoplasmic vesicle. It is found in the secretory vesicle. Its subcellular location is the synaptic vesicle. Functionally, general Rab protein regulator required for vesicle formation from the Golgi complex. May control vesicle docking and fusion by mediating the action of Rab GTPases to the SNARE complexes. In addition it inhibits the removal of Rab GTPases from the membrane by GDI1. In Bos taurus (Bovine), this protein is Prenylated Rab acceptor protein 1 (RABAC1).